Reading from the N-terminus, the 129-residue chain is Phosphoribosyl-AMP cyclohydrolase (129 aa).

Position 78 (Asp78) interacts with Mg(2+). Cys79 lines the Zn(2+) pocket. 2 residues coordinate Mg(2+): Asp80 and Asp82. 2 residues coordinate Zn(2+): Cys96 and Cys103.

The protein belongs to the PRA-CH family. Homodimer. Mg(2+) is required as a cofactor. The cofactor is Zn(2+).

The protein localises to the cytoplasm. It catalyses the reaction 1-(5-phospho-beta-D-ribosyl)-5'-AMP + H2O = 1-(5-phospho-beta-D-ribosyl)-5-[(5-phospho-beta-D-ribosylamino)methylideneamino]imidazole-4-carboxamide. The protein operates within amino-acid biosynthesis; L-histidine biosynthesis; L-histidine from 5-phospho-alpha-D-ribose 1-diphosphate: step 3/9. Functionally, catalyzes the hydrolysis of the adenine ring of phosphoribosyl-AMP. The polypeptide is Phosphoribosyl-AMP cyclohydrolase (Nitrosomonas europaea (strain ATCC 19718 / CIP 103999 / KCTC 2705 / NBRC 14298)).